Reading from the N-terminus, the 209-residue chain is Large ribosomal subunit protein uL3 (209 aa).

The tract at residues 118-151 is disordered; sequence GFQGAIKRHGQSRGPMSHGSRYHRRPGSMGPVAP.

The protein belongs to the universal ribosomal protein uL3 family. Part of the 50S ribosomal subunit. Forms a cluster with proteins L14 and L19.

Its function is as follows. One of the primary rRNA binding proteins, it binds directly near the 3'-end of the 23S rRNA, where it nucleates assembly of the 50S subunit. This chain is Large ribosomal subunit protein uL3, found in Enterococcus faecalis (strain ATCC 700802 / V583).